The chain runs to 459 residues: Acetyltransferase pigO (459 aa).

This sequence belongs to the trichothecene O-acetyltransferase family.

Its pathway is secondary metabolite biosynthesis. In terms of biological role, acetyltransferase; part of the gene cluster that mediates the biosynthesis of azaphilone pigments (MonAzPs), a complex mixture of compounds with a common azaphilone skeleton very widely used as food colorants. PigM and pigO are involved in the elimination of the omega-1 alcohol with pigM acting as an O-acetyltransferase that synthesizes the O-11 acetyl intermediate whereas pigO eliminates acetic acid to yield an intermediate with a C10(11) double bond. The first step of the pathway is performed by the nrPKS pigA that forms the hexaketide precursor from successive condensations of five malonyl-CoA units, with a simple acetyl-CoA starter unit. The role of esterase pigG is not clear, but it may play at most a supplementary role in the formation of the benzaldehyde produced by the pigA nrPKS. This very reactive benzaldehyde is intercepted by the pigC ketoreductase that to provide the first stable enzyme-free MonAzPs intermediate, 6-(4-hydroxy-2-oxopentyl)-3-methyl-2,4-dioxocyclohexane carbaldehyde, also known as M7PKS-1. The FAD-dependent monooxygenase pigN hydroxylates M7PKS-1 at C-4, which triggers the formation of the pyran ring. PigJ, pigK and pigD are involved in the acetylation of the pyran ring. PigJ and pigK form the two subunits of a dedicated fungal FAS that produces the side chain fatty acyl moiety of MonAzPs and pigD transfers the fatty acyl chain to the C-4 alcohol. PigM and pigO are involved in the elimination of the omega-1 alcohol. PigM acts as an O-acetyltransferase that synthesizes the putative O-11 acetyl intermediate whereas pigO eliminates acetic acid to yield an intermediate with a C10(11) double bond. The dehydration of the C-11 alcohol followed by the reduction of the C6(7) double bond by the NAD(P)H-dependent oxidoreductase pigE increases the electrophilicity of the C-5 ketone of the resulting acyl benzopyran. This in turn sets up the C-5 ketone for an intramolecular Knoevenagel aldol condensation with the C-20 enol of the side chain. This condensation affords the characteristic linear tricyclic carbon skeletons of the yellow pigments that serve as the common precursors for the classical yellow pigments monascin and ankaflavin, orange pigments rubopunctatin and monascorubrin, and red pigments ribropunctamine and monascorubramine. The FAD-dependent oxidoreductase pigF is especially invoved in the biosynthesis of orange and red pigments via desaturation of C6(7). This is Acetyltransferase pigO from Monascus ruber (Mold).